Here is a 98-residue protein sequence, read N- to C-terminus: Large ribosomal subunit protein eL30 (98 aa).

This sequence belongs to the eukaryotic ribosomal protein eL30 family.

The polypeptide is Large ribosomal subunit protein eL30 (Methanosphaera stadtmanae (strain ATCC 43021 / DSM 3091 / JCM 11832 / MCB-3)).